We begin with the raw amino-acid sequence, 395 residues long: Chalcone synthase 1 (395 aa).

Val-2 carries the post-translational modification N-acetylvaline. Residue Cys-169 is part of the active site.

This sequence belongs to the thiolase-like superfamily. Chalcone/stilbene synthases family.

The catalysed reaction is (E)-4-coumaroyl-CoA + 3 malonyl-CoA + 3 H(+) = 2',4,4',6'-tetrahydroxychalcone + 3 CO2 + 4 CoA. The protein operates within secondary metabolite biosynthesis; flavonoid biosynthesis. In terms of biological role, the primary product of this enzyme is 4,2',4',6'-tetrahydroxychalcone (also termed naringenin-chalcone or chalcone) which can under specific conditions spontaneously isomerize into naringenin. The protein is Chalcone synthase 1 (CHS1) of Sinapis alba (White mustard).